We begin with the raw amino-acid sequence, 350 residues long: Ion-translocating oxidoreductase complex subunit D (350 aa).

4 helical membrane-spanning segments follow: residues 37–57 (YFFG…ALTA), 68–88 (AVLS…IGVA), 89–109 (IPPI…IVLV), and 120–140 (IFNP…VQMT). Position 185 is an FMN phosphoryl threonine (threonine 185). 5 helical membrane-spanning segments follow: residues 212-232 (GYGV…LIML), 239-259 (WHIS…GYLL), 265-285 (VGPL…FIAT), 291-311 (ATSV…VYVI), and 315-335 (GGYP…APFI).

This sequence belongs to the NqrB/RnfD family. As to quaternary structure, the complex is composed of six subunits: RnfA, RnfB, RnfC, RnfD, RnfE and RnfG. It depends on FMN as a cofactor.

The protein resides in the cell inner membrane. Part of a membrane-bound complex that couples electron transfer with translocation of ions across the membrane. This Shewanella pealeana (strain ATCC 700345 / ANG-SQ1) protein is Ion-translocating oxidoreductase complex subunit D.